The sequence spans 447 residues: Glycogen synthase (447 aa).

Residue Arg-15 participates in ADP-alpha-D-glucose binding.

It belongs to the glycosyltransferase 1 family. Bacterial/plant glycogen synthase subfamily.

The enzyme catalyses [(1-&gt;4)-alpha-D-glucosyl](n) + ADP-alpha-D-glucose = [(1-&gt;4)-alpha-D-glucosyl](n+1) + ADP + H(+). It functions in the pathway glycan biosynthesis; glycogen biosynthesis. Its function is as follows. Synthesizes alpha-1,4-glucan chains using ADP-glucose. This chain is Glycogen synthase, found in Deinococcus geothermalis (strain DSM 11300 / CIP 105573 / AG-3a).